The following is a 710-amino-acid chain: MDIHRCRFIDYTPSAITAMAFSHKSGQNDSMPNNLLLAVGRASGNIEIWNPRNDWCLKTVLYGGVDRSIEGIVWSTGEEELRLFSIGFSTTITEWNLHTGKPLVNQDSNAGAIWSIAICDETKTLAVGCDDGSCVLFDISGGPGVIEFKRVLMRQTSRILSLDFQTKDHLVGGCADGVIKVWDLSTPNSAIISRMQVDRARKGEAALIWAVKSLRDGTIVSADSSGAVKFWNGKFFTLSQSFKLHLADALCLGVSANGDMVFSSGIDRKTIQYSREGGKREWVSNSFRRFHSHDVRCMAVFECKSLDVLISGGMDMMLAVIPVRQFNRKNHRMISAVPQRPRMAVAPKARLFMLWNDHEVLLWRIGSPGYRFLLKIVLADEENISHAAISPDGELIAISSVLRTKLYQLQYSDENVKVETVEDSFLSNIGASLLSFTVDKNKLILVSNDSEIFLIELSRLDSRQLEVFELSQPTSKKIAPRQRSNVSSMCDGICSIAVSSDGDYFAVADTVGNIFCYSLSNLTYSELPRVNTYVRAMAFRPDVRGRLAVATAGNQVYEFDVQSRKLSEWSKNNSTNMPKEFSQLLDKAFGAFFDSKHPSRFWIWSANWVSFFDLNLQLPAPRAAGKRKIEMNATVDGNLNDKKLANANSNGISNYGTGDSRCFWITHKYRPMLLVGSVGNSELLVVERPIADMLMSKSMPASFYEHKFGS.

9 WD repeats span residues 11 to 59 (YTPS…CLKT), 64 to 105 (GVDR…PLVN), 108 to 147 (SNAGAIWSIAICDETKTLAVGCDDGSCVLFDISGGPGVIE), 154 to 192 (RQTSRILSLDFQTKDHLVGGCADGVIKVWDLSTPNSAII), 199 to 241 (RARK…LSQS), 290 to 327 (FHSHDVRCMAVFECKSLDVLISGGMDMMLAVIPVRQFN), 328 to 365 (RKNHRMISAVPQRPRMAVAPKARLFMLWNDHEVLLWRI), 488 to 527 (SMCDGICSIAVSSDGDYFAVADTVGNIFCYSLSNLTYSEL), and 529 to 569 (RVNT…LSEW).

In terms of assembly, component of the ribosomal small subunit (SSU) processome.

Its subcellular location is the nucleus. The protein resides in the nucleolus. Its function is as follows. Involved in nucleolar processing of pre-18S ribosomal RNA. Required for optimal pre-ribosomal RNA transcription by RNA polymerase I together with a subset of U3 proteins required for transcription (t-UTPs). This is U3 small nucleolar RNA-associated protein 4 (utp4) from Schizosaccharomyces pombe (strain 972 / ATCC 24843) (Fission yeast).